A 369-amino-acid chain; its full sequence is Cobalt-precorrin-5B C(1)-methyltransferase (369 aa).

This sequence belongs to the CbiD family.

The catalysed reaction is Co-precorrin-5B + S-adenosyl-L-methionine = Co-precorrin-6A + S-adenosyl-L-homocysteine. The protein operates within cofactor biosynthesis; adenosylcobalamin biosynthesis; cob(II)yrinate a,c-diamide from sirohydrochlorin (anaerobic route): step 6/10. Its function is as follows. Catalyzes the methylation of C-1 in cobalt-precorrin-5B to form cobalt-precorrin-6A. The polypeptide is Cobalt-precorrin-5B C(1)-methyltransferase (Geobacter metallireducens (strain ATCC 53774 / DSM 7210 / GS-15)).